Consider the following 1046-residue polypeptide: Piwi-like protein 2 (1046 aa).

A compositionally biased stretch (pro residues) spans methionine 1–proline 12. The interval methionine 1 to leucine 35 is disordered. Over residues tryptophan 19 to aspartate 31 the composition is skewed to polar residues. The 114-residue stretch at serine 462–glycine 575 folds into the PAZ domain. One can recognise a Piwi domain in the interval leucine 741 to histidine 1032. Catalysis depends on residues aspartate 818, glutamate 856, aspartate 888, and histidine 1021.

Belongs to the argonaute family. Piwi subfamily. Component of the PET complex. Requires Mg(2+) as cofactor. Post-translationally, methylated on arginine residues; required for the interaction with Tudor domain-containing protein and subsequent localization to the meiotic nuage, also named P granule. Detected in primordial germ cells (PGCs) from 3 dpf. In adult, it is found in both the female and male gonad. In the ovary, it is present in all stages of germ cell differentiation. In testis, it is present in mitotic and meiotic germ cells. No protein has been detected in the fully differentiated sperm cell.

It localises to the cytoplasm. The protein localises to the nucleus. In terms of biological role, endoribonuclease that plays a central role during spermatogenesis by repressing transposable elements and preventing their mobilization, which is essential for the germline integrity. Plays an essential role in germ cell differentiation and meiosis, independently of the function in transposable elements repression. Acts via the piRNA metabolic process, which mediates the repression of transposable elements during meiosis by forming complexes composed of piRNAs and Piwi proteins and govern the methylation and subsequent repression of transposons. During piRNA biosynthesis, plays a key role in the piRNA amplification loop, also named ping-pong amplification cycle, by acting as a 'slicer-competent' piRNA endoribonuclease that cleaves primary piRNAs, which are then loaded onto 'slicer-incompetent' piwil4. Piwil2 slicing produces a pre-miRNA intermediate, which is then processed in mature piRNAs, and as well as a 16 nucleotide by-product that is degraded. Required for piwil4/miwi2 nuclear localization and association with secondary piRNAs antisense. Represses circadian rhythms by promoting the stability and activity of core clock components BMAL1 and CLOCK. In Danio rerio (Zebrafish), this protein is Piwi-like protein 2 (piwil2).